We begin with the raw amino-acid sequence, 92 residues long: Acylphosphatase (92 aa).

An Acylphosphatase-like domain is found at 6–92; that stretch reads RMYVIVYGIV…TGEFASFDTY (87 aa). Active-site residues include R21 and N39.

This sequence belongs to the acylphosphatase family.

It carries out the reaction an acyl phosphate + H2O = a carboxylate + phosphate + H(+). This Sulfolobus acidocaldarius (strain ATCC 33909 / DSM 639 / JCM 8929 / NBRC 15157 / NCIMB 11770) protein is Acylphosphatase (acyP).